A 679-amino-acid chain; its full sequence is Glycine--tRNA ligase beta subunit (679 aa).

The protein belongs to the class-II aminoacyl-tRNA synthetase family. Tetramer of two alpha and two beta subunits.

It localises to the cytoplasm. It catalyses the reaction tRNA(Gly) + glycine + ATP = glycyl-tRNA(Gly) + AMP + diphosphate. The polypeptide is Glycine--tRNA ligase beta subunit (glyS) (Bacillus subtilis (strain 168)).